A 234-amino-acid polypeptide reads, in one-letter code: MWGCGARALLGVWEVRLAGFLGRRLLGSNAAAGKSIAPQCWNCGHAREAGCGDEFFCSHCRALQPPDPTRDYFSLMNCNRSFRVDVTKLQHRYQQLQRLVHPDFFSQKSQTEKHFSDKHSTLVNDAYKTLQAPLTRGLYLLKLQGIEIPEGTDYKADSQFLVEIMEINERLADAQSEAAMEEIEATVRAKQKEFTDNINSAFEQGDFEKAKELLTKMRYFSNIEEKIKLSKTPL.

The a divalent metal cation site is built by cysteine 40, cysteine 43, cysteine 57, and cysteine 60. The region spanning 71 to 143 (DYFSLMNCNR…LTRGLYLLKL (73 aa)) is the J domain.

Belongs to the HscB family. Interacts with ISCU and HSPA9 to form an iron-sulfur transfer complex. Interacts with SDHAF1 (via the first LYR motif); the interaction recruits the iron-sulfur transfer complex composed of HSC20, HSPA9 and ISCU and mediates the incorporation of iron-sulfur clusters into SDHB which also interacts with HSC20. Interacts with the cytoplasmic form of ISCU and with CIA complex member CIAO1 (via LYR motif). As to quaternary structure, homodimer. Interacts with ISCU (cytoplasmic form); this interaction stabilizes the (Fe-S) clusters on ISCU. Interacts with the CIA complex member CIAO1 (via LYR motif).

It is found in the cytoplasm. It localises to the mitochondrion. It participates in cofactor biosynthesis; iron-sulfur cluster biosynthesis. Functionally, acts as a co-chaperone in iron-sulfur cluster assembly in mitochondria. Required for incorporation of iron-sulfur clusters into SDHB, the iron-sulfur protein subunit of succinate dehydrogenase that is involved in complex II of the mitochondrial electron transport chain. Recruited to SDHB by interaction with SDHAF1 which first binds SDHB and then recruits the iron-sulfur transfer complex formed by HSC20, HSPA9 and ISCU through direct binding to HSC20. Plays an essential role in hematopoiesis. Its function is as follows. Acts as a co-chaperone in iron-sulfur cluster assembly in the cytoplasm. Also mediates complex formation between components of the cytosolic iron-sulfur biogenesis pathway and the CIA targeting complex composed of CIAO1, DIPK1B/FAM69B and MMS19 by binding directly to the scaffold protein ISCU and to CIAO1. This facilitates iron-sulfur cluster insertion into a number of cytoplasmic and nuclear proteins including POLD1, ELP3, DPYD and PPAT. The polypeptide is Iron-sulfur cluster co-chaperone protein HscB (Mus musculus (Mouse)).